The following is a 150-amino-acid chain: Small heat shock protein HspE (150 aa).

One can recognise a sHSP domain in the interval 27–137; sequence VDNGDTYPPY…KPRQIAIDVA (111 aa).

The protein belongs to the small heat shock protein (HSP20) family.

The sequence is that of Small heat shock protein HspE (hspE) from Bradyrhizobium diazoefficiens (strain JCM 10833 / BCRC 13528 / IAM 13628 / NBRC 14792 / USDA 110).